We begin with the raw amino-acid sequence, 150 residues long: MPKKSVRHIKIREIISNEQIETQDELVKRLNDYDLNVTQATVSRDIKELQLIKVPIPSGQYVYSLPNDRKFHPLEKLGRYLMDSFVNIDGTDNLLVLKTLPGNAQSIGAILDQINWEEVLGTICGDDTCLIICRSKEASDEIKSRIFNLL.

It belongs to the ArgR family.

It is found in the cytoplasm. Its pathway is amino-acid biosynthesis; L-arginine biosynthesis [regulation]. Regulates arginine biosynthesis genes. The sequence is that of Arginine repressor from Staphylococcus aureus (strain Mu3 / ATCC 700698).